Consider the following 493-residue polypeptide: METLLKISGVDKSFPGVKALNNACLSVYAGRVMALMGENGAGKSTLMKVLTGIYSKDAGTIEYLNRSVNFNGPKASQEAGISIIHQELNLVGNLTIAENIFLGREFKTSWGAINWQKMHQEADKLLARLGVTHSSKQLCAELSIGEQQMVEIAKALSFESKVIIMDEPTDALTDTETEALFNVIRELKAENRGIVYISHRLKEIFQICDDVTVLRDGQFIGERIVAEITEDDLIEMMVGRRLDEQYPHLSQEKGECVLDVKNVSGSGIDDVSFKLHAGEIVGVSGLMGAGRTELGKLLYGALPKTAGKVRLKNQEIENLSPQDGLDNGIVYISEDRKGDGLVLGMSVKENMSLTSLDHFSQKGSIRHQAEKMTVDDFILMFNIKTPNRDQQVGLLSGGNQQKVAIARGLMTRPNVLILDEPTRGVDVGAKKEIYQLINEFKKEGLSILMISSDMPEVLGMSDRVLVMREGKISAEFSRKDATQEKLLAAAIGK.

ABC transporter domains follow at residues 5-241 (LKIS…VGRR) and 252-491 (EKGE…AAAI). ATP is bound at residue 37–44 (GENGAGKS).

It belongs to the ABC transporter superfamily. Ribose importer (TC 3.A.1.2.1) family. In terms of assembly, the complex is composed of an ATP-binding protein (RbsA), two transmembrane proteins (RbsC) and a solute-binding protein (RbsB).

It is found in the cell inner membrane. It catalyses the reaction D-ribose(out) + ATP + H2O = D-ribose(in) + ADP + phosphate + H(+). Its function is as follows. Part of the ABC transporter complex RbsABC involved in ribose import. Responsible for energy coupling to the transport system. The protein is Ribose import ATP-binding protein RbsA of Haemophilus influenzae (strain 86-028NP).